The primary structure comprises 424 residues: E3 ubiquitin-protein ligase RNF26 (424 aa).

The next 5 membrane-spanning stretches (helical) occupy residues 24–44, 60–80, 157–177, 183–203, and 224–244; these read LNFL…AFIY, GFLL…FGGL, ISTQ…TGPL, VVAA…ILLW, and VVFH…ILIV. The RING-type zinc finger occupies 371-413; the sequence is CVICQDQSKTVLLLPCRHLCLCQACTEILMRHPVYHRNCPLCR.

Interacts with INCA1. Interacts with TMEM43, ENDOD1, TMEM33 and TMED1 to form a complex capable of modulating innate immune signaling through the cGAS-STING pathway. Interacts with UBE2J1; this interaction is important for SQSTM1 ubiquitination.

The protein resides in the endoplasmic reticulum membrane. It carries out the reaction S-ubiquitinyl-[E2 ubiquitin-conjugating enzyme]-L-cysteine + [acceptor protein]-L-lysine = [E2 ubiquitin-conjugating enzyme]-L-cysteine + N(6)-ubiquitinyl-[acceptor protein]-L-lysine.. The protein operates within protein modification; protein ubiquitination. Functionally, E3 ubiquitin-protein ligase that plays a key role in endosome organization by retaining vesicles in the perinuclear cloud. Acts as a platform for perinuclear positioning of the endosomal system by mediating ubiquitination of SQSTM1 through interaction with the ubiquitin conjugating enzyme UBE2J1. Ubiquitinated SQSTM1 attracts specific vesicle-associated adapters, forming a molecular bridge that restrains cognate vesicles in the perinuclear region and organizes the endosomal pathway for efficient cargo transport. Also acts as a regulator of type I interferon production in response to viral infection by mediating the formation of 'Lys-11'-linked polyubiquitin chains on TMEM173/STING, leading to stabilize TMEM173/STING. Also required to limit type I interferon response by promoting autophagic degradation of IRF3. The sequence is that of E3 ubiquitin-protein ligase RNF26 from Mus musculus (Mouse).